The chain runs to 340 residues: ATPase GET3 (340 aa).

35-42 provides a ligand contact to ATP; it reads KGGVGKTT. Asp64 is an active-site residue. ATP is bound by residues Glu245 and Asn272. Cys283 and Cys286 together coordinate Zn(2+).

The protein belongs to the arsA ATPase family. As to quaternary structure, homodimer.

It localises to the cytoplasm. It is found in the endoplasmic reticulum. In terms of biological role, ATPase required for the post-translational delivery of tail-anchored (TA) proteins to the endoplasmic reticulum. Recognizes and selectively binds the transmembrane domain of TA proteins in the cytosol. This complex then targets to the endoplasmic reticulum by membrane-bound receptors, where the tail-anchored protein is released for insertion. This process is regulated by ATP binding and hydrolysis. ATP binding drives the homodimer towards the closed dimer state, facilitating recognition of newly synthesized TA membrane proteins. ATP hydrolysis is required for insertion. Subsequently, the homodimer reverts towards the open dimer state, lowering its affinity for the membrane-bound receptor, and returning it to the cytosol to initiate a new round of targeting. The sequence is that of ATPase GET3 from Chaetomium globosum (strain ATCC 6205 / CBS 148.51 / DSM 1962 / NBRC 6347 / NRRL 1970) (Soil fungus).